The chain runs to 517 residues: Protein disulfide isomerase-like 1-2 (517 aa).

Positions 1 to 23 are cleaved as a signal peptide; sequence MAVNLVLSFALAILISSSPTAVG. A Thioredoxin 1 domain is found at 24–143; it reads VDATEELKEA…IVEYLKRQVG (120 aa). Residue Asn-41 is glycosylated (N-linked (GlcNAc...) asparagine). Catalysis depends on nucleophile residues Cys-61 and Cys-64. Cys-61 and Cys-64 are oxidised to a cystine. Asn-301 is a glycosylation site (N-linked (GlcNAc...) asparagine). One can recognise a Thioredoxin 2 domain in the interval 357–484; it reads VEYGNLTPYV…IISFINENRG (128 aa). Residues Cys-407 and Cys-410 each act as nucleophile in the active site. Cys-407 and Cys-410 are disulfide-bonded. The Prevents secretion from ER signature appears at 514–517; sequence KDEL.

Belongs to the protein disulfide isomerase family.

Its subcellular location is the endoplasmic reticulum lumen. The catalysed reaction is Catalyzes the rearrangement of -S-S- bonds in proteins.. Functionally, acts as a protein-folding catalyst that interacts with nascent polypeptides to catalyze the formation, isomerization, and reduction or oxidation of disulfide bonds. May play a role in storage protein biogenesis. This is Protein disulfide isomerase-like 1-2 (PDIL1-2) from Oryza sativa subsp. japonica (Rice).